The primary structure comprises 369 residues: Dof zinc finger protein DOF2.5 (369 aa).

The Dof-type zinc-finger motif lies at 80-134; it reads LNCPRCNSTNTKFCYYNNYSLTQPRYFCKGCRRYWTEGGSLRNVPVGGSSRKNKR. Zn(2+)-binding residues include Cys82, Cys85, Cys107, and Cys110. 4 disordered regions span residues 120–149, 203–224, 284–304, and 322–369; these read LRNV…TIPS, EGNG…YGSS, TDHQ…HSDH, and SSSI…GSSW. A compositionally biased stretch (low complexity) spans 214-224; sequence PSSSSSVYGSS. The span at 284 to 297 shows a compositional bias: polar residues; sequence TDHQGLGHNSNNRS. A compositionally biased stretch (low complexity) spans 342 to 362; that stretch reads NNNNNNNSSPNNGYWSGMFST.

As to expression, expressed in the vascular system of the mother plant, but not present in the seed and embryo. In maturing siliques, found all through the funiculus connecting the placenta to the ovule, but not in the ovule.

It localises to the nucleus. Functionally, transcription factor specifically involved in the maternal control of seed germination. Regulates transcription by binding to a 5'-AA[AG]G-3' consensus core sequence. May ensure the activation of a component that would trigger germination as a consequence of red light perception. This Arabidopsis thaliana (Mouse-ear cress) protein is Dof zinc finger protein DOF2.5 (DOF2.5).